We begin with the raw amino-acid sequence, 67 residues long: Large ribosomal subunit protein bL35 (67 aa).

It belongs to the bacterial ribosomal protein bL35 family.

This Agrobacterium fabrum (strain C58 / ATCC 33970) (Agrobacterium tumefaciens (strain C58)) protein is Large ribosomal subunit protein bL35.